Reading from the N-terminus, the 165-residue chain is uncharacterized protein (165 aa).

This sequence belongs to the IIV-6 415R family.

This is an uncharacterized protein from Invertebrate iridescent virus 3 (IIV-3).